Reading from the N-terminus, the 405-residue chain is MNILQFNVRLAEGGAAGVALDLHQRALQQGLASHFVYGYGKGGKESVSHQNYPQVIKHTPRMTAMANIALFRLFNRDLFGNFNELYRTITRTAGPVVLHFHVLHSYWLNLKSVVRFCEKVKNHKPDVTLVWTLHDHWSVTGRCAFTDGCEGWKTGCQKCPTLNNYPPVKIDRAHQLVAGKRQLFREMLALGCQFISPSQHVADAFNSLYGPGRCRIINNGIDMATEAILADLPPVRETQGKPKIAVVAHDLRYDGKTNQQLVREMMALGDKIELHTFGKFSPFTAGNVVNHGFETDKRKLMSALNQMDALVFSSRVDNYPLILCEALSIGVPVIATHSDAAREVLQKSGGKTVSEEEVLQLVQLSKPEIAQAIFGTTLAEFSQRSRAAYSGQQMLEEYVNFYQNL.

Its pathway is slime biogenesis; slime polysaccharide biosynthesis. In Escherichia coli (strain K12), this protein is Putative colanic acid biosynthesis glycosyl transferase WcaC (wcaC).